The chain runs to 127 residues: MNTPFNDGSGQTDPMTDIPTPLIFTDNAANKVRELIEEEGNNDLKLRVFVAGGGCSGFKYGFTFDELISEDDTVMEKNGVKLLVDAMSFQYLAGAEIDYQENAEGAQFIIKNPGAASTCGCGSSFSV.

Residues 1–14 (MNTPFNDGSGQTDP) show a composition bias toward polar residues. The tract at residues 1-20 (MNTPFNDGSGQTDPMTDIPT) is disordered. Iron-sulfur cluster contacts are provided by C55, C119, and C121.

This sequence belongs to the HesB/IscA family. Homodimer. The cofactor is iron-sulfur cluster.

Functionally, required for insertion of 4Fe-4S clusters. The polypeptide is Putative iron-sulfur cluster insertion protein ErpA (Nitrosospira multiformis (strain ATCC 25196 / NCIMB 11849 / C 71)).